A 513-amino-acid polypeptide reads, in one-letter code: ATP synthase subunit alpha (513 aa).

Residue 169-176 (GDRQTGKT) participates in ATP binding.

It belongs to the ATPase alpha/beta chains family. In terms of assembly, F-type ATPases have 2 components, CF(1) - the catalytic core - and CF(0) - the membrane proton channel. CF(1) has five subunits: alpha(3), beta(3), gamma(1), delta(1), epsilon(1). CF(0) has three main subunits: a(1), b(2) and c(9-12). The alpha and beta chains form an alternating ring which encloses part of the gamma chain. CF(1) is attached to CF(0) by a central stalk formed by the gamma and epsilon chains, while a peripheral stalk is formed by the delta and b chains.

Its subcellular location is the cell inner membrane. It catalyses the reaction ATP + H2O + 4 H(+)(in) = ADP + phosphate + 5 H(+)(out). Produces ATP from ADP in the presence of a proton gradient across the membrane. The alpha chain is a regulatory subunit. In Actinobacillus succinogenes (strain ATCC 55618 / DSM 22257 / CCUG 43843 / 130Z), this protein is ATP synthase subunit alpha.